An 894-amino-acid polypeptide reads, in one-letter code: Exocyst complex component 1 (894 aa).

Coiled-coil stretches lie at residues 152-199 (GDEE…LQVL) and 205-259 (QSIM…NHLI). A disordered region spans residues 437-495 (SKESKKFATLPRKESAVKQETESLHGSSGKLTGSTSSLNKLSVQSSGSRRSQSSSLLDM). Positions 438–459 (KESKKFATLPRKESAVKQETES) are enriched in basic and acidic residues. Residues 460 to 491 (LHGSSGKLTGSTSSLNKLSVQSSGSRRSQSSS) are compositionally biased toward low complexity. Ser470 is modified (phosphoserine). Phosphothreonine is present on Thr471. Residues Ser473, Ser487, and Ser501 each carry the phosphoserine modification.

Belongs to the SEC3 family. The exocyst complex is composed of EXOC1, EXOC2, EXOC3, EXOC4, EXOC5, EXOC6, EXOC7 and EXOC8. Interacts with EEF1A1. Interacts with SLC6A9; interaction increases the transporter capacity of SLC6A9 probably by promoting its insertion into the cell membrane.

Its subcellular location is the midbody. The protein localises to the midbody ring. The protein resides in the cytoplasm. It is found in the perinuclear region. It localises to the cell membrane. Component of the exocyst complex involved in the docking of exocytic vesicles with fusion sites on the plasma membrane. This Mus musculus (Mouse) protein is Exocyst complex component 1 (Exoc1).